A 283-amino-acid chain; its full sequence is Pantothenate synthetase (283 aa).

ATP is bound at residue 26–33 (MGNLHEGH). The active-site Proton donor is the H33. Q57 contacts (R)-pantoate. A beta-alanine-binding site is contributed by Q57. An ATP-binding site is contributed by 144–147 (GKKD). Q150 contributes to the (R)-pantoate binding site. ATP contacts are provided by residues V173 and 181–184 (LSSR).

It belongs to the pantothenate synthetase family. In terms of assembly, homodimer.

The protein localises to the cytoplasm. It catalyses the reaction (R)-pantoate + beta-alanine + ATP = (R)-pantothenate + AMP + diphosphate + H(+). It functions in the pathway cofactor biosynthesis; (R)-pantothenate biosynthesis; (R)-pantothenate from (R)-pantoate and beta-alanine: step 1/1. Catalyzes the condensation of pantoate with beta-alanine in an ATP-dependent reaction via a pantoyl-adenylate intermediate. This chain is Pantothenate synthetase, found in Ralstonia nicotianae (strain ATCC BAA-1114 / GMI1000) (Ralstonia solanacearum).